The chain runs to 176 residues: Cell division control protein 31 (176 aa).

A compositionally biased stretch (basic residues) spans 1–12 (MFANARAKRRSR). Residues 1–21 (MFANARAKRRSRASSPTPARL) form a disordered region. EF-hand domains lie at 34-69 (EQRQDINEAFKLFDSDKDNAIDYHELRAAMRALGFN), 70-105 (AEKSEVLKILRDFDKTGKGYLQMEDFVRVMTEKIVE), 107-142 (DPLEEIKRAFELFDDDETGKISLRNLRRVAKELNEN), and 143-176 (IDDQELEAMIEEFDLDQDGEINEQEFIAIMMDEA). Positions 47, 49, 51, and 58 each coordinate Ca(2+). Ca(2+)-binding residues include Asp156, Asp158, Asp160, Glu162, and Glu167.

The protein belongs to the centrin family. As to quaternary structure, component of the spindle pole body (SPB), acting as the connector of microtubule arrays in the cytoplasm and the nucleoplasm, is involved in nuclear positioning before chromosome segregation, SPB separation, spindle formation, chromosome segregation, nuclear migration into the bud, nuclear reorientation after cytokinesis and nuclear fusion during conjugation. The SPB half-bridge, which is tightly associated with the cytoplasmic side of the nuclear envelope and the SPB, is playing a key role as the starting structure for and in the initiation of SPB duplication in G1. Within the complex, interacts with sad1.

It is found in the nucleus. Required for the proper coordination between exit from mitosis and the initiation of septation. Has a role in bipolar spindle formation during spindle pole body (SPB) duplication. Required for the localization of sad1 to the SPB. The sequence is that of Cell division control protein 31 (cdc31) from Schizosaccharomyces pombe (strain 972 / ATCC 24843) (Fission yeast).